A 248-amino-acid chain; its full sequence is Granzyme E (248 aa).

An N-terminal signal peptide occupies residues 1 to 18 (MPPVLILLTLLLPLGAGA). A propeptide spanning residues 19–20 (EE) is cleaved from the precursor. Residues 21-246 (IIGGHVVKPH…FLPWISRNMK (226 aa)) enclose the Peptidase S1 domain. An intrachain disulfide couples Cys-50 to Cys-66. The active-site Charge relay system is His-65. 2 N-linked (GlcNAc...) asparagine glycosylation sites follow: Asn-68 and Asn-102. Asp-109 functions as the Charge relay system in the catalytic mechanism. Cystine bridges form between Cys-143/Cys-210 and Cys-175/Cys-189. An N-linked (GlcNAc...) asparagine glycan is attached at Asn-154. Residue Ser-204 is the Charge relay system of the active site. An N-linked (GlcNAc...) asparagine glycan is attached at Asn-223.

The protein belongs to the peptidase S1 family. Granzyme subfamily.

Its subcellular location is the cytolytic granule. This enzyme is probably necessary for target cell lysis in cell-mediated immune responses. This is Granzyme E (Gzme) from Mus musculus (Mouse).